Here is a 638-residue protein sequence, read N- to C-terminus: MPLITLPDGNTIEFPNKVTGLEVAEKISKSLSKQATIISVNEELKDLSFVLDKDCSVKIFTSKDKEGLETIRHDTAHITAMAVQELFPGTQVTIGPIIENGFYYDFSRKEPFTEDDLNKIENKMKEIVDRDVPTTREVWKRDKAISHFKDKGEIYKAEIIESIPQGEDVSIYFHGDWHDLCRGPHLSSTGKIGKYFKLTKVSGAYWRGDSNNEMLQRIYGTSWASQKDLDEYLKRIEEAEKRDHRKLGKEMDLFHFREESPGSVFWHEKGWKLFQKLVAYMRARQEKAGYKEVNTPEILDRSLWEKSGHWEKYGEHMYTSQTPDEKIFAIKPMNCPGHVQVFNQGLKSYRDLPLRISEFGKVHRYEPSGALHGLLRVRAFTQDDAHIFCTEDQITSECLIVTNLILDIYKDLGFEDVILKYSDRPDLRVGDDNVWDKAEKALLDAVKASKLQYTINKGEGAFYGPKIEFVLRDAIGRDWQCGTLQVDLNLPGRLDASFVDKDGTKKIPVMLHRALFGSLERFIGILIENYAGKFPFWIAPLQVVVIPISEEFDSYAKEVNEKINNAGISSEVDLKNHNLNYKIREHSLSKIPLLLICGKKEVDSNSVTIRRLDTNKQENMELNLFLETFSALNKASSN.

The region spanning 1 to 61 (MPLITLPDGN…DKDCSVKIFT (61 aa)) is the TGS domain. Residues 243–535 (DHRKLGKEMD…LIENYAGKFP (293 aa)) form a catalytic region. Residues cysteine 335, histidine 386, and histidine 512 each coordinate Zn(2+).

Belongs to the class-II aminoacyl-tRNA synthetase family. Homodimer. The cofactor is Zn(2+).

Its subcellular location is the cytoplasm. It carries out the reaction tRNA(Thr) + L-threonine + ATP = L-threonyl-tRNA(Thr) + AMP + diphosphate + H(+). In terms of biological role, catalyzes the attachment of threonine to tRNA(Thr) in a two-step reaction: L-threonine is first activated by ATP to form Thr-AMP and then transferred to the acceptor end of tRNA(Thr). Also edits incorrectly charged L-seryl-tRNA(Thr). This is Threonine--tRNA ligase from Pelagibacter ubique (strain HTCC1062).